The chain runs to 83 residues: Exodeoxyribonuclease 7 small subunit (83 aa).

Belongs to the XseB family. In terms of assembly, heterooligomer composed of large and small subunits.

The protein localises to the cytoplasm. The catalysed reaction is Exonucleolytic cleavage in either 5'- to 3'- or 3'- to 5'-direction to yield nucleoside 5'-phosphates.. Bidirectionally degrades single-stranded DNA into large acid-insoluble oligonucleotides, which are then degraded further into small acid-soluble oligonucleotides. This is Exodeoxyribonuclease 7 small subunit from Brucella melitensis biotype 1 (strain ATCC 23456 / CCUG 17765 / NCTC 10094 / 16M).